The following is a 252-amino-acid chain: Imidazole glycerol phosphate synthase subunit HisF (252 aa).

Residues D11 and D130 contribute to the active site.

It belongs to the HisA/HisF family. In terms of assembly, heterodimer of HisH and HisF.

The protein localises to the cytoplasm. The enzyme catalyses 5-[(5-phospho-1-deoxy-D-ribulos-1-ylimino)methylamino]-1-(5-phospho-beta-D-ribosyl)imidazole-4-carboxamide + L-glutamine = D-erythro-1-(imidazol-4-yl)glycerol 3-phosphate + 5-amino-1-(5-phospho-beta-D-ribosyl)imidazole-4-carboxamide + L-glutamate + H(+). The protein operates within amino-acid biosynthesis; L-histidine biosynthesis; L-histidine from 5-phospho-alpha-D-ribose 1-diphosphate: step 5/9. Functionally, IGPS catalyzes the conversion of PRFAR and glutamine to IGP, AICAR and glutamate. The HisF subunit catalyzes the cyclization activity that produces IGP and AICAR from PRFAR using the ammonia provided by the HisH subunit. The chain is Imidazole glycerol phosphate synthase subunit HisF from Halothermothrix orenii (strain H 168 / OCM 544 / DSM 9562).